We begin with the raw amino-acid sequence, 157 residues long: SsrA-binding protein (157 aa).

The protein belongs to the SmpB family.

The protein localises to the cytoplasm. Required for rescue of stalled ribosomes mediated by trans-translation. Binds to transfer-messenger RNA (tmRNA), required for stable association of tmRNA with ribosomes. tmRNA and SmpB together mimic tRNA shape, replacing the anticodon stem-loop with SmpB. tmRNA is encoded by the ssrA gene; the 2 termini fold to resemble tRNA(Ala) and it encodes a 'tag peptide', a short internal open reading frame. During trans-translation Ala-aminoacylated tmRNA acts like a tRNA, entering the A-site of stalled ribosomes, displacing the stalled mRNA. The ribosome then switches to translate the ORF on the tmRNA; the nascent peptide is terminated with the 'tag peptide' encoded by the tmRNA and targeted for degradation. The ribosome is freed to recommence translation, which seems to be the essential function of trans-translation. In Clostridium novyi (strain NT), this protein is SsrA-binding protein.